The sequence spans 600 residues: MPQQNLLILYGSQTGTAEDLAGRLSREAKRHHFNCRTEALDEYRVANLINEHLVIFVCATTGQGDPPDNMKNFWRFIFRRNLPHNALCQMDYAVLGLGDSSYPKFNFIAKKLHKRLNQLGACPLLPAALGDDQHELGPDAVVDPWLKDLWSKVLSMFPLRPGLEIISEDVLLPPKYSLRLLEEKVGQSELSGDAYERDFISNNTTPPSEIHPFLAPVLSNERVSAHDHFQDVRLIEFNITGSAIQFYPGDVVMVQPRNSLLHVEQFCSLLHLDPLNKVVVEPSDPESPVPMHLAALCSVQQLVERYLDICSIPRRSFFQLFCHFSPDEMEREKLKEFSCAAGQEELYSYCNRPRRTILEVLVDFPHTTRCIPATFLLELIPQIRPRAFSIASSMEALPNTIQILMAVVQYKTKLIEPRRGLCSTWLASLPPHGTERVPIWVKKGSMKFPCDPDTPVVMVGPGTGVAPFRAAIQERVANGRPGNCLFFGCRGKSKDFYFEKEWEDLGNRGYLTLFTAFSRDQEDKIYVQHRIKENSKLLWDLIGTKQGYVYIAGNAKLMPNEVTDALKWVLQLEGGMSAPDAEQYLASMEKSCRFQSETWS.

Residues 6 to 150 (LLILYGSQTG…VVDPWLKDLW (145 aa)) form the Flavodoxin-like domain. FMN contacts are provided by residues 12–17 (SQTGTA), 59–62 (ATTG), 97–106 (LGDSSYPKFN), and aspartate 132. Residues 210–449 (IHPFLAPVLS…WVKKGSMKFP (240 aa)) enclose the FAD-binding FR-type domain. Residues arginine 354, 386-389 (RAFS), and 420-423 (GLCS) contribute to the FAD site. Residues threonine 463, 518–519 (SR), and 524–528 (KIYVQ) each bind NADP(+). Tryptophan 599 is a binding site for FAD.

Belongs to the NADPH-dependent diflavin oxidoreductase NDOR1 family. It in the N-terminal section; belongs to the flavodoxin family. The protein in the C-terminal section; belongs to the flavoprotein pyridine nucleotide cytochrome reductase family. In terms of assembly, interacts with ciapin1; as part of the cytosolic iron-sulfur (Fe-S) protein assembly (CIA) machinery. The cofactor is FAD. FMN is required as a cofactor.

Its subcellular location is the cytoplasm. The protein resides in the perinuclear region. It catalyses the reaction 2 oxidized [2Fe-2S]-[protein] + NADPH = 2 reduced [2Fe-2S]-[protein] + NADP(+) + H(+). NADPH-dependent reductase which is a central component of the cytosolic iron-sulfur (Fe-S) protein assembly (CIA) machinery. Transfers electrons from NADPH via its FAD and FMN prosthetic groups to the [2Fe-2S] cluster of ciapin1, another key component of the CIA machinery. In turn, this reduced cluster provides electrons for assembly of cytosolic iron-sulfur cluster proteins. It can also reduce the [2Fe-2S] cluster of cisd1 and activate this protein implicated in Fe/S cluster repair. This Xenopus laevis (African clawed frog) protein is NADPH-dependent diflavin oxidoreductase 1.